Reading from the N-terminus, the 374-residue chain is Glutamate 5-kinase (374 aa).

K17 is a binding site for ATP. Residues S57, D144, and N156 each coordinate substrate. Residues 176-177 (SD) and 218-224 (TGGMVTK) each bind ATP. Positions 280-358 (QGALVLDDGA…RELARELGPA (79 aa)) constitute a PUA domain.

It belongs to the glutamate 5-kinase family.

The protein resides in the cytoplasm. It catalyses the reaction L-glutamate + ATP = L-glutamyl 5-phosphate + ADP. The protein operates within amino-acid biosynthesis; L-proline biosynthesis; L-glutamate 5-semialdehyde from L-glutamate: step 1/2. In terms of biological role, catalyzes the transfer of a phosphate group to glutamate to form L-glutamate 5-phosphate. The polypeptide is Glutamate 5-kinase (Streptomyces coelicolor (strain ATCC BAA-471 / A3(2) / M145)).